A 424-amino-acid chain; its full sequence is Homeobox-containing protein 1 (424 aa).

The 30-residue stretch at 1–30 folds into the HNF-p1 domain; the sequence is MLFTIEQLELIKKLQHTGMSSDQLLKAFGE. The POU-specific atypical domain maps to 103-199; sequence SQRTPMKEIT…PNKLAAFLAD (97 aa). The homeobox DNA-binding region spans 215–291; it reads QRRERYVFRP…NKRKELRRRS (77 aa). A disordered region spans residues 291–345; the sequence is SAEASAASTSSASSSASSTANHDSVSVSSMSPRDEETSSRNTTPETAISPSPAVS. Positions 293–310 are enriched in low complexity; the sequence is EASAASTSSASSSASSTA. 2 stretches are compositionally biased toward polar residues: residues 311-321 and 329-345; these read NHDSVSVSSMS and SRNT…PAVS.

It belongs to the HMBOX1 homeobox family. In terms of tissue distribution, expressed in both AWC neurons. Also expressed in the FLP mechanosensory neurons.

The protein resides in the nucleus. Functionally, transcriptional repressor which maintains cell fate asymmetry of AWC neurons in adults by repressing the expression of multiple AWC (OFF) genes, including srsx-3 in the AWC (ON) neuron. This chain is Homeobox-containing protein 1, found in Caenorhabditis elegans.